Consider the following 155-residue polypeptide: Transcriptional repressor NrdR (155 aa).

A zinc finger lies at 3-34 (CPFCSHFESKVVDSRPTDEGQAIRRRRECVSC). The ATP-cone domain occupies 49 to 139 (LIVVKKSGNR…VYREFKDINT (91 aa)).

Belongs to the NrdR family. The cofactor is Zn(2+).

Negatively regulates transcription of bacterial ribonucleotide reductase nrd genes and operons by binding to NrdR-boxes. This Alkaliphilus metalliredigens (strain QYMF) protein is Transcriptional repressor NrdR.